Reading from the N-terminus, the 186-residue chain is Acetyltransferase PA2578 (186 aa).

One can recognise an N-acetyltransferase domain in the interval 12–176; the sequence is LQLVPFQLGH…NVVLMGLLRQ (165 aa). CoA is bound by residues glutamine 37, 97 to 99, glycine 105, asparagine 137, and 142 to 144; these read IVL and HLY.

In terms of assembly, homodimer.

Functionally, catalyzes the transfer of an acetyl group from acetyl coenzyme A (AcCoA) to an acceptor substrate and releases both CoA and the acetylated product. It prefers the antibiotic chloramphenicol. This Pseudomonas aeruginosa (strain ATCC 15692 / DSM 22644 / CIP 104116 / JCM 14847 / LMG 12228 / 1C / PRS 101 / PAO1) protein is Acetyltransferase PA2578.